We begin with the raw amino-acid sequence, 267 residues long: MWIGVVSLFPEMFEAITRYGVTGRAVDQGLLEVDFWNPRDYATDKHRTVDDRPYGGGPGMLMKVATLRPAIAEARRDAERRGCAPARTRVVYLSPQGRRLDQRGVRELADLEALIVVAGRYEGIDERVVEADIDEEWSIGDYVLSGGELPAMVMVDAVSRLVPGVLGHGDSALEDSFSEGLLDCPHYTRPETIDGRQVPDILLSGNHAAIRRWRLKQSLGRTWLRRPELLEGRALDREQQRLLDEFIAEQATSQNVGRTEERRPLEE.

S-adenosyl-L-methionine-binding positions include Gly119 and 139–144; that span reads IGDYVL.

Belongs to the RNA methyltransferase TrmD family. Homodimer.

The protein resides in the cytoplasm. It catalyses the reaction guanosine(37) in tRNA + S-adenosyl-L-methionine = N(1)-methylguanosine(37) in tRNA + S-adenosyl-L-homocysteine + H(+). Specifically methylates guanosine-37 in various tRNAs. The polypeptide is tRNA (guanine-N(1)-)-methyltransferase (Chromohalobacter salexigens (strain ATCC BAA-138 / DSM 3043 / CIP 106854 / NCIMB 13768 / 1H11)).